A 191-amino-acid polypeptide reads, in one-letter code: Small ribosomal subunit protein uS11m (191 aa).

The disordered stretch occupies residues 37-62 (PRLEDSAARQNTEREAAPSRFSLYPP). The segment covering 38–53 (RLEDSAARQNTEREAA) has biased composition (basic and acidic residues).

Belongs to the universal ribosomal protein uS11 family. In terms of assembly, component of the mitochondrial ribosome small subunit (28S) which comprises a 12S rRNA and about 30 distinct proteins.

Its subcellular location is the mitochondrion. The chain is Small ribosomal subunit protein uS11m (Mrps11) from Mus musculus (Mouse).